Reading from the N-terminus, the 170-residue chain is Phosphopantetheine adenylyltransferase (170 aa).

Threonine 10 is a binding site for substrate. ATP is bound by residues 10–11 and histidine 18; that span reads TF. Substrate-binding residues include lysine 42, valine 79, and arginine 93. Residues 94-96, glutamate 104, and 129-135 contribute to the ATP site; these read GLR and TQFISST.

It belongs to the bacterial CoaD family. Homohexamer. Mg(2+) serves as cofactor.

It is found in the cytoplasm. The catalysed reaction is (R)-4'-phosphopantetheine + ATP + H(+) = 3'-dephospho-CoA + diphosphate. The protein operates within cofactor biosynthesis; coenzyme A biosynthesis; CoA from (R)-pantothenate: step 4/5. Reversibly transfers an adenylyl group from ATP to 4'-phosphopantetheine, yielding dephospho-CoA (dPCoA) and pyrophosphate. This chain is Phosphopantetheine adenylyltransferase, found in Parvibaculum lavamentivorans (strain DS-1 / DSM 13023 / NCIMB 13966).